The sequence spans 519 residues: GTPase Der (519 aa).

2 stretches are compositionally biased toward acidic residues: residues 1–12 (MDVEGAFADEEE) and 30–54 (GYED…PDFG). Residues 1–54 (MDVEGAFADEEELAPHGGWASADFDPAEFGYEDSDDDFDAEDFDETEFSNPDFG) form a disordered region. EngA-type G domains follow at residues 81 to 244 (CTVA…PEEP) and 254 to 427 (RRVA…DNWD). Residues 87-94 (GRPNVGKS), 134-138 (DTGGW), 196-199 (NKFD), 260-267 (GKPNVGKS), 307-311 (DTAGL), and 372-375 (NKWD) each bind GTP. Residues 428 to 510 (RRISTGQLNT…PVRIAVRVRE (83 aa)) enclose the KH-like domain.

Belongs to the TRAFAC class TrmE-Era-EngA-EngB-Septin-like GTPase superfamily. EngA (Der) GTPase family. Associates with the 50S ribosomal subunit.

GTPase that plays an essential role in the late steps of ribosome biogenesis. This chain is GTPase Der, found in Corynebacterium glutamicum (strain ATCC 13032 / DSM 20300 / JCM 1318 / BCRC 11384 / CCUG 27702 / LMG 3730 / NBRC 12168 / NCIMB 10025 / NRRL B-2784 / 534).